The following is a 239-amino-acid chain: MNRPFFIALDFDEHAKRQRFLESFAAETLDVKIGMELFYREGLSVVHELKEAGYRLFLDLKLHDIPNTVGRTMRALAELDVDVVNVHAAGGKAMMEAALEGLDAGTRAGKQRPKLIAVTQLTSTDSRMLAEELLIDKAMDEVVVRYAQLAQESGLDGVVCSAHEVPLIRAACSDRFLTVTPGIRRQVDQVGDQVRVVTPGEAKALGSWAIVVGRSITAAADPLAVYREMNQDWKGATEH.

Residues D10, K32, 59–68 (DLKLHDIPNT), T122, R184, Q193, G213, and R214 each bind substrate. The active-site Proton donor is the K61.

This sequence belongs to the OMP decarboxylase family. Type 1 subfamily. Homodimer.

The enzyme catalyses orotidine 5'-phosphate + H(+) = UMP + CO2. Its pathway is pyrimidine metabolism; UMP biosynthesis via de novo pathway; UMP from orotate: step 2/2. Its function is as follows. Catalyzes the decarboxylation of orotidine 5'-monophosphate (OMP) to uridine 5'-monophosphate (UMP). The polypeptide is Orotidine 5'-phosphate decarboxylase (Shouchella clausii (strain KSM-K16) (Alkalihalobacillus clausii)).